We begin with the raw amino-acid sequence, 197 residues long: Elongation factor Ts (197 aa).

An involved in Mg(2+) ion dislocation from EF-Tu region spans residues 81-84 (TDFV).

It belongs to the EF-Ts family.

It localises to the cytoplasm. Associates with the EF-Tu.GDP complex and induces the exchange of GDP to GTP. It remains bound to the aminoacyl-tRNA.EF-Tu.GTP complex up to the GTP hydrolysis stage on the ribosome. In Persephonella marina (strain DSM 14350 / EX-H1), this protein is Elongation factor Ts.